The chain runs to 984 residues: Protein translocase subunit SecA (984 aa).

ATP contacts are provided by residues Gln96, 114 to 118 (GEGKT), and Asp595. Basic and acidic residues-rich tracts occupy residues 930–942 (EHEE…RLLE) and 952–971 (KSDK…EERL). Residues 930-984 (EHEEEKKHQRLLEEAELQGVQGKSDKKPRPKTLKERLKEERLRKRKLKAKKKEQE) form a disordered region. The span at 972 to 984 (RKRKLKAKKKEQE) shows a compositional bias: basic residues.

It belongs to the SecA family. Monomer and homodimer. Part of the essential Sec protein translocation apparatus which comprises SecA, SecYEG and auxiliary proteins SecDF. Other proteins may also be involved.

The protein resides in the cell inner membrane. The protein localises to the cytoplasm. The catalysed reaction is ATP + H2O + cellular proteinSide 1 = ADP + phosphate + cellular proteinSide 2.. Its function is as follows. Part of the Sec protein translocase complex. Interacts with the SecYEG preprotein conducting channel. Has a central role in coupling the hydrolysis of ATP to the transfer of proteins into and across the cell membrane, serving as an ATP-driven molecular motor driving the stepwise translocation of polypeptide chains across the membrane. The protein is Protein translocase subunit SecA of Aquifex aeolicus (strain VF5).